The sequence spans 626 residues: SHC-transforming protein 4 (626 aa).

Residues 1 to 185 (MRERSQDSQA…KQDGPPLQHL (185 aa)) form a CH2 region. 2 disordered regions span residues 38-76 (ITSLDEGSPGGSVGNKGSSPPPYPALAPHLPTEDATVSS) and 119-182 (LQEN…GPPL). Polar residues predominate over residues 120-139 (QENQDQTPSRPASPESNLNR). Positions 186 to 369 (LGNGLNYCVR…LVDGAPEDRD (184 aa)) constitute a PID domain. The CH1 stretch occupies residues 370–521 (HDYYNSIPGK…HIRQQLWDEE (152 aa)). Tyr-422 is modified (phosphotyrosine). Residues 522–613 (CFHGKLSRGA…GSEVRLKQPI (92 aa)) form the SH2 domain.

In terms of assembly, interacts (via PID domain) with phosphorylated MUSK (via NPXY motif); undergoes tyrosine phosphorylation downstream of activated MUSK. Interacts with GRB2; the interaction is dependent of Tyr-422 phosphorylation and increased by EGF. Phosphorylated; the phosphorylation is enhanced by EGF. Phosphorylation at Tyr-422 is required for the interaction with GRB2. In terms of tissue distribution, expressed in both brain and skeletal muscle; widely expressed in brain namely olfactory bulb, cortex, hippocampus, striatum, thalamus, and brain stem (at protein level). Only expressed in melanomas. Weakly expressed in normal melanocytes and benign nevi. Highly expressed at the transition from radial growth phase to vertical growth phase and metastatic melanomas, when tumor cells acquire migratory competence and invasive potential.

The protein localises to the postsynaptic cell membrane. Its function is as follows. Activates both Ras-dependent and Ras-independent migratory pathways in melanomas. Contributes to the early phases of agrin-induced tyrosine phosphorylation of CHRNB1. The protein is SHC-transforming protein 4 (Shc4) of Mus musculus (Mouse).